The chain runs to 637 residues: MAETAAESGGGGDSGVGACERGVAPIKAQYRTTKERFHEYLDGDKQEGACQEVPTGDPAEPGAKRIRLEDGQENGKTEVAIESRERQVPKRARGQNKSRPHVKPAHYDKDRLCPSFLQEPATPCAFGDRCRFLHDVGRYLETKPADLGPRCVLFETFGRCPFSMTCRFAGAHLGPEGQNLVQEEVVARCAQLPSVRNGLDRALQQQLRKRQVCFERAEQALNRLTQSPMPTVVPETTVAMATPKQNSCHAQLDTVGGAGTPQSSPVPTCGPLTDEDVIRLRPCEKKRLDISGKLYLAPLTTCGNLPFRRICKRFGADVTCGEMAVCTNLLQGQMSEWALLKRHPCEDIFGVQLEGAFPDTMTKCAELLNRTIDVDFVDINVGCPIDLVYKKGGGCALMNRSAKFQQIVRGVNGVLDVPLTVKMRTGVQERVSLAHRLLPELRDWGVALVTLHGRSREQRYTRLADWPYIEQCAKVASPMPLFGNGDILSFEDANCAMQTGVAGIMVARGALLKPWLFTEIKEQRHWDISSSERLDILRDFTHYGLEHWGSDTQGVERTRRFLLEWLSFLCRYVPVGLLERPPQRINERPPYYLGRDYLETLMASQQAADWIRISEMLLGPVPPGFVFLPKHKANAYK.

Disordered regions lie at residues Met-1–Arg-21, Leu-41–Ala-63, and Glu-85–Ala-105. Over residues Pro-89 to Pro-104 the composition is skewed to basic residues. 2 C3H1-type zinc fingers span residues Tyr-107 to Gly-137 and Ala-145 to Pro-175. The residue at position 260 (Thr-260) is a Phosphothreonine. Phosphoserine is present on residues Ser-263 and Ser-264. Residues Pro-298 to Thr-300 and Gln-352 each bind FMN. The active-site Proton donor is the Cys-383. Residue Lys-403 forms a Glycyl lysine isopeptide (Lys-Gly) (interchain with G-Cter in SUMO2) linkage. Residues Lys-422, His-452, Asn-484–Asp-486, and Ala-507–Arg-508 contribute to the FMN site.

Belongs to the Dus family. Dus3 subfamily. It depends on FMN as a cofactor.

The catalysed reaction is 5,6-dihydrouridine(47) in tRNA + NAD(+) = uridine(47) in tRNA + NADH + H(+). The enzyme catalyses 5,6-dihydrouridine(47) in tRNA + NADP(+) = uridine(47) in tRNA + NADPH + H(+). It catalyses the reaction a 5,6-dihydrouridine in mRNA + NAD(+) = a uridine in mRNA + NADH + H(+). It carries out the reaction a 5,6-dihydrouridine in mRNA + NADP(+) = a uridine in mRNA + NADPH + H(+). Functionally, catalyzes the synthesis of dihydrouridine, a modified base, in various RNAs, such as tRNAs, mRNAs and some long non-coding RNAs (lncRNAs). Mainly modifies the uridine in position 47 (U47) in the D-loop of most cytoplasmic tRNAs. Also able to mediate the formation of dihydrouridine in some mRNAs, thereby regulating their translation. The chain is tRNA-dihydrouridine(47) synthase [NAD(P)(+)]-like from Mus musculus (Mouse).